Consider the following 460-residue polypeptide: tRNA modification GTPase MnmE (460 aa).

Arginine 22, glutamate 87, and arginine 126 together coordinate (6S)-5-formyl-5,6,7,8-tetrahydrofolate. The TrmE-type G domain maps to glycine 222 to phenylalanine 381. Residue asparagine 232 participates in K(+) binding. GTP is bound by residues asparagine 232 to serine 237, threonine 251 to threonine 257, and aspartate 276 to glycine 279. Position 236 (serine 236) interacts with Mg(2+). Residues threonine 251, isoleucine 253, and threonine 256 each coordinate K(+). Threonine 257 lines the Mg(2+) pocket. Lysine 460 serves as a coordination point for (6S)-5-formyl-5,6,7,8-tetrahydrofolate.

The protein belongs to the TRAFAC class TrmE-Era-EngA-EngB-Septin-like GTPase superfamily. TrmE GTPase family. In terms of assembly, homodimer. Heterotetramer of two MnmE and two MnmG subunits. The cofactor is K(+).

The protein resides in the cytoplasm. In terms of biological role, exhibits a very high intrinsic GTPase hydrolysis rate. Involved in the addition of a carboxymethylaminomethyl (cmnm) group at the wobble position (U34) of certain tRNAs, forming tRNA-cmnm(5)s(2)U34. The protein is tRNA modification GTPase MnmE of Thermoanaerobacter pseudethanolicus (strain ATCC 33223 / 39E) (Clostridium thermohydrosulfuricum).